The primary structure comprises 739 residues: Probable beta-glucosidase L (739 aa).

A signal peptide spans 1–17; the sequence is MQTLFLSLLAAAVTVHA. Residues Asn-40 and Asn-224 are each glycosylated (N-linked (GlcNAc...) asparagine). Residue Asp-252 is part of the active site. Residue Asn-398 is glycosylated (N-linked (GlcNAc...) asparagine).

Belongs to the glycosyl hydrolase 3 family.

The protein localises to the secreted. It catalyses the reaction Hydrolysis of terminal, non-reducing beta-D-glucosyl residues with release of beta-D-glucose.. It participates in glycan metabolism; cellulose degradation. Functionally, beta-glucosidases are one of a number of cellulolytic enzymes involved in the degradation of cellulosic biomass. Catalyzes the last step releasing glucose from the inhibitory cellobiose. This is Probable beta-glucosidase L (bglL) from Aspergillus fumigatus (strain CBS 144.89 / FGSC A1163 / CEA10) (Neosartorya fumigata).